We begin with the raw amino-acid sequence, 666 residues long: Calcium/calmodulin-dependent protein kinase type II subunit beta (666 aa).

The region spanning 14–272 (YQLYEDIGKG…AHEALKHPWV (259 aa)) is the Protein kinase domain. Tyr17 carries the phosphotyrosine modification. ATP contacts are provided by residues 20–28 (IGKGAFSVV) and Lys43. Residue Asp136 is the Proton acceptor of the active site. An autoinhibitory domain region spans residues 283-292 (HRQETVECLK). Position 287 is a phosphothreonine; by autocatalysis (Thr287). The segment at 291 to 301 (LKKFNARRKLK) is calmodulin-binding. Phosphothreonine; by autocatalysis is present on residues Thr306 and Thr307. A disordered region spans residues 349 to 534 (ADGVKPQTNS…IPGPLPTPSR (186 aa)). Residues 354–369 (PQTNSTKNSAAATSPK) show a composition bias toward polar residues. 3 positions are modified to phosphoserine: Ser367, Ser394, and Ser397. A phosphothreonine mark is found at Thr400 and Thr401. Over residues 432 to 447 (LPCPSPAPFSPLPAPS) the composition is skewed to pro residues. The segment covering 479–491 (SPALLGPLSSPSP) has biased composition (low complexity). The segment covering 514–531 (PVGPPPCPSPTIPGPLPT) has biased composition (pro residues).

This sequence belongs to the protein kinase superfamily. CAMK Ser/Thr protein kinase family. CaMK subfamily. CAMK2 is composed of 4 different chains: alpha (CAMK2A), beta (CAMK2B), gamma (CAMK2G), and delta (CAMK2D). The different isoforms assemble into homo- or heteromultimeric holoenzymes composed of 12 subunits with two hexameric rings stacked one on top of the other. Interacts with SYNGAP1 and CAMK2N2. Interacts with MPDZ. Interacts with FOXO3. Interacts (when in a kinase inactive state not associated with calmodulin) with ARC; leading to target ARC to inactive synapses. Interacts with CAMK2N1; this interaction requires CAMK2B activation by Ca(2+). In terms of processing, autophosphorylation of Thr-287 following activation by Ca(2+)/calmodulin. Phosphorylation of Thr-287 locks the kinase into an activated state. In terms of tissue distribution, widely expressed. Expressed in adult and fetal brain. Expression is slightly lower in fetal brain. Expressed in skeletal muscle.

Its subcellular location is the cytoplasm. The protein resides in the cytoskeleton. It localises to the microtubule organizing center. It is found in the centrosome. The protein localises to the sarcoplasmic reticulum membrane. Its subcellular location is the synapse. It carries out the reaction L-seryl-[protein] + ATP = O-phospho-L-seryl-[protein] + ADP + H(+). The catalysed reaction is L-threonyl-[protein] + ATP = O-phospho-L-threonyl-[protein] + ADP + H(+). Its activity is regulated as follows. Activated by Ca(2+)/calmodulin. Binding of calmodulin results in conformational change that relieves intrasteric autoinhibition and allows autophosphorylation of Thr-287 which turns the kinase in a constitutively active form and confers to the kinase a Ca(2+)-independent activity. Its function is as follows. Calcium/calmodulin-dependent protein kinase that functions autonomously after Ca(2+)/calmodulin-binding and autophosphorylation, and is involved in dendritic spine and synapse formation, neuronal plasticity and regulation of sarcoplasmic reticulum Ca(2+) transport in skeletal muscle. In neurons, plays an essential structural role in the reorganization of the actin cytoskeleton during plasticity by binding and bundling actin filaments in a kinase-independent manner. This structural function is required for correct targeting of CaMK2A, which acts downstream of NMDAR to promote dendritic spine and synapse formation and maintain synaptic plasticity which enables long-term potentiation (LTP) and hippocampus-dependent learning. In developing hippocampal neurons, promotes arborization of the dendritic tree and in mature neurons, promotes dendritic remodeling. Also regulates the migration of developing neurons. Participates in the modulation of skeletal muscle function in response to exercise. In slow-twitch muscles, is involved in regulation of sarcoplasmic reticulum (SR) Ca(2+) transport and in fast-twitch muscle participates in the control of Ca(2+) release from the SR through phosphorylation of triadin, a ryanodine receptor-coupling factor, and phospholamban (PLN/PLB), an endogenous inhibitor of SERCA2A/ATP2A2. In response to interferon-gamma (IFN-gamma) stimulation, catalyzes phosphorylation of STAT1, stimulating the JAK-STAT signaling pathway. Phosphorylates reticulophagy regulator RETREG1 at 'Ser-151' under endoplasmic reticulum stress conditions which enhances RETREG1 oligomerization and its membrane scission and reticulophagy activity. This Homo sapiens (Human) protein is Calcium/calmodulin-dependent protein kinase type II subunit beta (CAMK2B).